The sequence spans 460 residues: 3-isopropylmalate dehydratase large subunit (460 aa).

The [4Fe-4S] cluster site is built by cysteine 338, cysteine 398, and cysteine 401.

This sequence belongs to the aconitase/IPM isomerase family. LeuC type 1 subfamily. As to quaternary structure, heterodimer of LeuC and LeuD. [4Fe-4S] cluster serves as cofactor.

The catalysed reaction is (2R,3S)-3-isopropylmalate = (2S)-2-isopropylmalate. The protein operates within amino-acid biosynthesis; L-leucine biosynthesis; L-leucine from 3-methyl-2-oxobutanoate: step 2/4. Its function is as follows. Catalyzes the isomerization between 2-isopropylmalate and 3-isopropylmalate, via the formation of 2-isopropylmaleate. This Streptococcus thermophilus (strain ATCC BAA-491 / LMD-9) protein is 3-isopropylmalate dehydratase large subunit.